A 477-amino-acid chain; its full sequence is Delayed-rectifier potassium channel regulatory subunit KCNS2 (477 aa).

Residues 1–184 (MTRQSLWDVS…LALDNPGYSV (184 aa)) are Cytoplasmic-facing. A helical transmembrane segment spans residues 185–206 (LSRVFSVLSILVVLGSIITMCL). Topologically, residues 207–225 (NSLPDFQIPDSQGNPGEDP) are extracellular. Residues 226 to 248 (RFEIVEHFGIAWFTFELVARFAV) form a helical membrane-spanning segment. The Cytoplasmic portion of the chain corresponds to 249-259 (APDFLKFFKNA). Residues 260-280 (LNLIDLMSIVPFYITLVVNLV) traverse the membrane as a helical segment. Over 281–290 (VESSPTLANL) the chain is Extracellular. A helical; Voltage-sensor transmembrane segment spans residues 291–311 (GRVAQVLRLMRIFRILKLARH). Residues 312–326 (STGLRSLGATLKYSY) are Cytoplasmic-facing. The helical transmembrane segment at 327 to 348 (KEVGLLLLYLSVGISIFSVVAY) threads the bilayer. Over 349–361 (TIEKEENEGLATI) the chain is Extracellular. The helical intramembrane region spans 362–373 (PACWWWATVSMT). A Selectivity filter motif is present at residues 374-379 (TVGYGD). Residues 374 to 381 (TVGYGDVV) lie within the membrane without spanning it. Residues 382–388 (PGTTAGK) are Extracellular-facing. The helical transmembrane segment at 389-417 (LTASACILAGILVVVLPITLIFNKFSHFY) threads the bilayer. Residues 418-477 (RRQKQLESAMRSCDFGDGMKEVPSVNLRDYYAHKVKSLMASLTNMSRSSPSELSLDDSLH) lie on the Cytoplasmic side of the membrane.

Belongs to the potassium channel family. S (TC 1.A.1.2) subfamily. Kv9.2/KCNS2 sub-subfamily. As to quaternary structure, heterotetramer with KCNB1 and KCNB2. Does not form homomultimers. As to expression, detected in brain, but not in the other tissues tested. Expression was highest in the olfactory bulb, cerebral cortex, hippocampus, habenula, basolateral amygdaloid nuclei and cerebellum.

It localises to the cell membrane. Functionally, potassium channel regulatory subunit that modulate the delayed rectifier voltage-gated potassium channel activity of KCNB1 and KCNB2 by altering their kinetics, expression levels, and shifting the half-inactivation potential to more polarized values. While it does not form functional channels on its own, it can form functional heterotetrameric channels with KCNB1 and KCNB2. Each regulatory subunit has unique regulatory properties that can lead to extensive inhibition, significant changes in kinetics, and/or substantial shifts in the voltage dependencies of the inactivation process. This is Delayed-rectifier potassium channel regulatory subunit KCNS2 from Mus musculus (Mouse).